The chain runs to 264 residues: Undecaprenyl-diphosphatase (264 aa).

The next 7 membrane-spanning stretches (helical) occupy residues 34–54, 75–95, 104–124, 137–157, 180–200, 207–227, and 243–263; these read LLNLPIAIAYSFGLFMEMGSI, LLYLAIITIITGLVGVPLYII, YDPSIPMIILGIALIVDGLYI, LSLKNIILIGIAQGLAALPGV, YSYLAYIPAAVGAVGTTILFS, VISLIGIGGVLISVISAFIIG, and IYIIDFTLGGIAIVVSVLTIL.

Belongs to the UppP family.

The protein localises to the cell membrane. The enzyme catalyses di-trans,octa-cis-undecaprenyl diphosphate + H2O = di-trans,octa-cis-undecaprenyl phosphate + phosphate + H(+). Catalyzes the dephosphorylation of undecaprenyl diphosphate (UPP). This is Undecaprenyl-diphosphatase from Sulfurisphaera tokodaii (strain DSM 16993 / JCM 10545 / NBRC 100140 / 7) (Sulfolobus tokodaii).